A 395-amino-acid polypeptide reads, in one-letter code: 1-deoxy-D-xylulose 5-phosphate reductoisomerase (395 aa).

NADPH is bound by residues threonine 10, glycine 11, serine 12, isoleucine 13, and asparagine 123. Lysine 124 contacts 1-deoxy-D-xylulose 5-phosphate. Glutamate 125 lines the NADPH pocket. Aspartate 149 contributes to the Mn(2+) binding site. Residues serine 150, glutamate 151, serine 185, and histidine 208 each coordinate 1-deoxy-D-xylulose 5-phosphate. Residue glutamate 151 participates in Mn(2+) binding. Glycine 214 contributes to the NADPH binding site. 1-deoxy-D-xylulose 5-phosphate contacts are provided by serine 221, asparagine 226, lysine 227, and glutamate 230. Residue glutamate 230 participates in Mn(2+) binding.

It belongs to the DXR family. Requires Mg(2+) as cofactor. The cofactor is Mn(2+).

It catalyses the reaction 2-C-methyl-D-erythritol 4-phosphate + NADP(+) = 1-deoxy-D-xylulose 5-phosphate + NADPH + H(+). It participates in isoprenoid biosynthesis; isopentenyl diphosphate biosynthesis via DXP pathway; isopentenyl diphosphate from 1-deoxy-D-xylulose 5-phosphate: step 1/6. In terms of biological role, catalyzes the NADPH-dependent rearrangement and reduction of 1-deoxy-D-xylulose-5-phosphate (DXP) to 2-C-methyl-D-erythritol 4-phosphate (MEP). The polypeptide is 1-deoxy-D-xylulose 5-phosphate reductoisomerase (Shewanella sediminis (strain HAW-EB3)).